The sequence spans 722 residues: DUF724 domain-containing protein 7 (722 aa).

The segment at Lys-424 to Val-449 is disordered. The segment covering Met-434–Ser-444 has biased composition (polar residues). Positions Val-540 to Pro-720 constitute a DUF724 domain. Residues Cys-645–Glu-712 are a coiled coil.

Homodimer. Interacts wtih ABAP1, ARIA and LHP1. Interacts with the non-modified histones H1, H2B, H3 and H4. Expressed in roots, leaves, stems and flowers.

The protein resides in the nucleus. Its function is as follows. May act as a link between DNA replication, transcription and chromatin remodeling during flower development. May participate in the repression of LHP1-targeted genes during flower development by direct interaction with LHP1. May be involved in the polar growth of plant cells via transportation of RNAs. The chain is DUF724 domain-containing protein 7 from Arabidopsis thaliana (Mouse-ear cress).